Reading from the N-terminus, the 194-residue chain is Thymidylate kinase (194 aa).

Residue 7–14 (GVDCVGKS) coordinates ATP.

Belongs to the thymidylate kinase family.

It carries out the reaction dTMP + ATP = dTDP + ADP. Its function is as follows. Phosphorylation of dTMP to form dTDP in both de novo and salvage pathways of dTTP synthesis. The protein is Thymidylate kinase of Campylobacter lari (strain RM2100 / D67 / ATCC BAA-1060).